Here is a 451-residue protein sequence, read N- to C-terminus: MSILPGIDSTPTTNELFEGTNEIHKLEIEKGYEWKVEVNAESKLVIEVKSGIAEIFGTELANDIEYSFYNNKFSILAVEDVSLEWRCPEIPEQKLMIGENKTAKYVYNLHFSLEKMRAASFDGPKVMIVGGSNTGKTALARTLCSYAIKYKSYQPMFINLNPEEGIFSVAGCLTATPISDILDVQSTIWGHSMTSGATMLHSKQPLVKTFGLEHIKENQDLYLATLKQLSEVVKLRLQNDVLVHRSGCIIDTPPISVMDDDLTELTTTFKEFNVNVVILLSDEQEDPLLTKLNDKLSTISSSFNLLRLPILSGVIERDDVFKRSLQRLAIREYFYGSPSVVLSPYTIGVDFEDITVWRPINFIENPEETSQLLPTQLLPVEVKPTTLQHALVAISYADRKANESNVQLAPTLGFGLITEVNDKRRKLRILLPVPGRLPDKAMILTAYRYLE.

ATP-binding positions include E33, K72, and 133–138; that span reads NTGKTA.

Belongs to the Clp1 family. Clp1 subfamily. As to quaternary structure, component of a pre-mRNA cleavage factor complex. Interacts directly with PCF11.

Its subcellular location is the nucleus. In terms of biological role, required for endonucleolytic cleavage during polyadenylation-dependent pre-mRNA 3'-end formation. This is mRNA cleavage and polyadenylation factor CLP1 from Vanderwaltozyma polyspora (strain ATCC 22028 / DSM 70294 / BCRC 21397 / CBS 2163 / NBRC 10782 / NRRL Y-8283 / UCD 57-17) (Kluyveromyces polysporus).